Here is a 303-residue protein sequence, read N- to C-terminus: Pycsar effector protein BcPycTIR (303 aa).

22–138 lines the a nucleoside 3',5'-cyclic phosphate pocket; the sequence is KLVGGDKGLA…RRMAKELSKR (117 aa). Residues 154-273 form a TIR-like region; that stretch reads RVFVISSAEA…DMAGVTTIPY (120 aa).

In terms of assembly, purified protein forms large 2-dimensional sheets when incubated with cUMP and shorter filaments in the presence of cCMP.

The protein localises to the cytoplasm. The catalysed reaction is NAD(+) + H2O = ADP-D-ribose + nicotinamide + H(+). Its activity is regulated as follows. Activated by cyclic UMP (cUMP) and to a lesser extent by cCMP. Its function is as follows. Pycsar (pyrimidine cyclase system for antiphage resistance) provides immunity against bacteriophage. The pyrimidine cyclase (PycC) synthesizes cyclic nucleotides in response to infection; these serve as specific second messenger signals. The signals activate the adjacent effector, leading to bacterial cell death and abortive phage infection. A clade B Pycsar system. The effector protein of a two-gene Pycsar system. Upon activation by cyclic UMP (cUMP) degrades cellular NAD(+). Expression of this and adjacent uridylate cyclase BcPycC (AC A0A0J5ZXG5) probably confers resistance to bacteriophage. The genes are probably only expressed in response to bacteriophage infection. This protein probably only responds to cUMP (produced by its cognate NTP cyclase). This Burkholderia cepacia (Pseudomonas cepacia) protein is Pycsar effector protein BcPycTIR.